A 261-amino-acid chain; its full sequence is tRNA pseudouridine synthase A (261 aa).

Asp-51 acts as the Nucleophile in catalysis. Tyr-109 lines the substrate pocket.

Belongs to the tRNA pseudouridine synthase TruA family. In terms of assembly, homodimer.

It carries out the reaction uridine(38/39/40) in tRNA = pseudouridine(38/39/40) in tRNA. In terms of biological role, formation of pseudouridine at positions 38, 39 and 40 in the anticodon stem and loop of transfer RNAs. The protein is tRNA pseudouridine synthase A of Idiomarina loihiensis (strain ATCC BAA-735 / DSM 15497 / L2-TR).